We begin with the raw amino-acid sequence, 166 residues long: Interferon gamma (166 aa).

A signal peptide spans Met-1–Gly-23. At Gln-24 the chain carries Pyrrolidone carboxylic acid. N-linked (GlcNAc...) asparagine glycans are attached at residues Asn-39 and Asn-106.

The protein belongs to the type II (or gamma) interferon family. Homodimer. Interacts with IFNGR1 (via extracellular domain); this interaction promotes IFNGR1 dimerization. As to expression, released primarily from activated T lymphocytes.

It localises to the secreted. Type II interferon produced by immune cells such as T-cells and NK cells that plays crucial roles in antimicrobial, antiviral, and antitumor responses by activating effector immune cells and enhancing antigen presentation. Primarily signals through the JAK-STAT pathway after interaction with its receptor IFNGR1 to affect gene regulation. Upon IFNG binding, IFNGR1 intracellular domain opens out to allow association of downstream signaling components JAK2, JAK1 and STAT1, leading to STAT1 activation, nuclear translocation and transcription of IFNG-regulated genes. Many of the induced genes are transcription factors such as IRF1 that are able to further drive regulation of a next wave of transcription. Plays a role in class I antigen presentation pathway by inducing a replacement of catalytic proteasome subunits with immunoproteasome subunits. In turn, increases the quantity, quality, and repertoire of peptides for class I MHC loading. Increases the efficiency of peptide generation also by inducing the expression of activator PA28 that associates with the proteasome and alters its proteolytic cleavage preference. Up-regulates as well MHC II complexes on the cell surface by promoting expression of several key molecules such as cathepsins B/CTSB, H/CTSH, and L/CTSL. Participates in the regulation of hematopoietic stem cells during development and under homeostatic conditions by affecting their development, quiescence, and differentiation. The protein is Interferon gamma (IFNG) of Bos indicus (Zebu).